The following is a 153-amino-acid chain: ATP synthase subunit b' (153 aa).

Residues 23 to 40 (LMAIQVVALTYILNSLFF) form a helical membrane-spanning segment.

This sequence belongs to the ATPase B chain family. F-type ATPases have 2 components, F(1) - the catalytic core - and F(0) - the membrane proton channel. F(1) has five subunits: alpha(3), beta(3), gamma(1), delta(1), epsilon(1). F(0) has four main subunits: a(1), b(1), b'(1) and c(10-14). The alpha and beta chains form an alternating ring which encloses part of the gamma chain. F(1) is attached to F(0) by a central stalk formed by the gamma and epsilon chains, while a peripheral stalk is formed by the delta, b and b' chains.

Its subcellular location is the cellular thylakoid membrane. Functionally, f(1)F(0) ATP synthase produces ATP from ADP in the presence of a proton or sodium gradient. F-type ATPases consist of two structural domains, F(1) containing the extramembraneous catalytic core and F(0) containing the membrane proton channel, linked together by a central stalk and a peripheral stalk. During catalysis, ATP synthesis in the catalytic domain of F(1) is coupled via a rotary mechanism of the central stalk subunits to proton translocation. In terms of biological role, component of the F(0) channel, it forms part of the peripheral stalk, linking F(1) to F(0). The b'-subunit is a diverged and duplicated form of b found in plants and photosynthetic bacteria. This is ATP synthase subunit b' from Prochlorococcus marinus (strain MIT 9215).